The chain runs to 122 residues: Holo-[acyl-carrier-protein] synthase (122 aa).

Residues Asp9 and Glu58 each contribute to the Mg(2+) site.

The protein belongs to the P-Pant transferase superfamily. AcpS family. Mg(2+) is required as a cofactor.

It localises to the cytoplasm. The catalysed reaction is apo-[ACP] + CoA = holo-[ACP] + adenosine 3',5'-bisphosphate + H(+). In terms of biological role, transfers the 4'-phosphopantetheine moiety from coenzyme A to a Ser of acyl-carrier-protein. The polypeptide is Holo-[acyl-carrier-protein] synthase (Chlamydia felis (strain Fe/C-56) (Chlamydophila felis)).